The sequence spans 155 residues: S-ribosylhomocysteine lyase (155 aa).

Residues His-54, His-58, and Cys-122 each contribute to the Fe cation site.

Belongs to the LuxS family. As to quaternary structure, homodimer. Requires Fe cation as cofactor.

It carries out the reaction S-(5-deoxy-D-ribos-5-yl)-L-homocysteine = (S)-4,5-dihydroxypentane-2,3-dione + L-homocysteine. Involved in the synthesis of autoinducer 2 (AI-2) which is secreted by bacteria and is used to communicate both the cell density and the metabolic potential of the environment. The regulation of gene expression in response to changes in cell density is called quorum sensing. Catalyzes the transformation of S-ribosylhomocysteine (RHC) to homocysteine (HC) and 4,5-dihydroxy-2,3-pentadione (DPD). The sequence is that of S-ribosylhomocysteine lyase from Deinococcus deserti (strain DSM 17065 / CIP 109153 / LMG 22923 / VCD115).